We begin with the raw amino-acid sequence, 381 residues long: MPAPFPEDSVGLVTPQLFHFDQPLALANGRSLDSYELMVETYGELNAEKSNGILICHALSGSHHVAGYHSEDDKKPGWWEHYVGPGKPIDTNRFYVVCMNNIGGCHGSTGPQSINPATGKPWGSSFPFLRVRDWVETQVRLADRLGINQWAAVVGGSLGGMQAMRWALEHPNRLRHCVVIASAMNLTAQNIAFNETARQAIQSDPNFFNGDYLAQSTLPKRGLSVARMIGHITYLSDDGMGKKFGRELRSGSFDRGNDQLVEFQIESYLRYQGSTFSEVFDANTYILMTRALDYFDLAREYNGDAAEAFKQASCKFLVVSFTSDWRFAPERSREIVTALMRANRDVVYGEIDSVHGHDAFLVPNQLRYWELFSAYMNRVEV.

In terms of domain architecture, AB hydrolase-1 spans Ile53–Leu361. Ser157 (nucleophile) is an active-site residue. Residue Arg227 participates in substrate binding. Residues Asp324 and His357 contribute to the active site. Residue Asp358 participates in substrate binding.

It belongs to the AB hydrolase superfamily. MetX family. In terms of assembly, homodimer.

It localises to the cytoplasm. The enzyme catalyses L-homoserine + succinyl-CoA = O-succinyl-L-homoserine + CoA. It participates in amino-acid biosynthesis; L-methionine biosynthesis via de novo pathway; O-succinyl-L-homoserine from L-homoserine: step 1/1. Transfers a succinyl group from succinyl-CoA to L-homoserine, forming succinyl-L-homoserine. This Saccharophagus degradans (strain 2-40 / ATCC 43961 / DSM 17024) protein is Homoserine O-succinyltransferase.